The chain runs to 466 residues: Uronate isomerase (466 aa).

Belongs to the metallo-dependent hydrolases superfamily. Uronate isomerase family.

It catalyses the reaction D-glucuronate = D-fructuronate. The enzyme catalyses aldehydo-D-galacturonate = keto-D-tagaturonate. The protein operates within carbohydrate metabolism; pentose and glucuronate interconversion. This chain is Uronate isomerase, found in Lachnoclostridium phytofermentans (strain ATCC 700394 / DSM 18823 / ISDg) (Clostridium phytofermentans).